Consider the following 265-residue polypeptide: Secreted RxLR effector protein 146 (265 aa).

Positions 1-25 (MRYYTQVVAASLVATLAVVDSIVFA) are cleaved as a signal peptide. The short motif at 32 to 50 (RFLRQDGATVTRGGKGEER) is the RxLR-dEER element. N-linked (GlcNAc...) asparagine glycans are attached at residues N71 and N148.

It belongs to the RxLR effector family.

It is found in the secreted. Its subcellular location is the host nucleus. The protein localises to the host cytoplasm. Secreted effector that completely suppresses the host cell death induced by cell death-inducing proteins. This is Secreted RxLR effector protein 146 from Plasmopara viticola (Downy mildew of grapevine).